The chain runs to 152 residues: Small ribosomal subunit protein uS11 (152 aa).

This sequence belongs to the universal ribosomal protein uS11 family. As to quaternary structure, component of the small ribosomal subunit. Part of the small subunit (SSU) processome, composed of more than 70 proteins and the RNA chaperone small nucleolar RNA (snoRNA) U3.

It is found in the cytoplasm. The protein resides in the nucleus. The protein localises to the nucleolus. Component of the small ribosomal subunit. The ribosome is a large ribonucleoprotein complex responsible for the synthesis of proteins in the cell. Part of the small subunit (SSU) processome, first precursor of the small eukaryotic ribosomal subunit. During the assembly of the SSU processome in the nucleolus, many ribosome biogenesis factors, an RNA chaperone and ribosomal proteins associate with the nascent pre-rRNA and work in concert to generate RNA folding, modifications, rearrangements and cleavage as well as targeted degradation of pre-ribosomal RNA by the RNA exosome. The sequence is that of Small ribosomal subunit protein uS11 (rps-14) from Caenorhabditis elegans.